Here is a 179-residue protein sequence, read N- to C-terminus: Large ribosomal subunit protein uL6 (179 aa).

This sequence belongs to the universal ribosomal protein uL6 family. In terms of assembly, part of the 50S ribosomal subunit.

Its function is as follows. This protein binds to the 23S rRNA, and is important in its secondary structure. It is located near the subunit interface in the base of the L7/L12 stalk, and near the tRNA binding site of the peptidyltransferase center. This Spiroplasma citri protein is Large ribosomal subunit protein uL6.